The primary structure comprises 348 residues: Dihydroorotase (348 aa).

Residues His-13 and His-15 each coordinate Zn(2+). Substrate is bound by residues 15–17 and Asn-41; that span reads HLR. 3 residues coordinate Zn(2+): Lys-99, His-136, and His-174. The residue at position 99 (Lys-99) is an N6-carboxylysine. Position 136 (His-136) interacts with substrate. Leu-219 contributes to the substrate binding site. Asp-247 lines the Zn(2+) pocket. Residue Asp-247 is part of the active site. Substrate-binding residues include His-251 and Ala-263.

It belongs to the metallo-dependent hydrolases superfamily. DHOase family. Class II DHOase subfamily. As to quaternary structure, homodimer. Requires Zn(2+) as cofactor.

The catalysed reaction is (S)-dihydroorotate + H2O = N-carbamoyl-L-aspartate + H(+). It functions in the pathway pyrimidine metabolism; UMP biosynthesis via de novo pathway; (S)-dihydroorotate from bicarbonate: step 3/3. Its function is as follows. Catalyzes the reversible cyclization of carbamoyl aspartate to dihydroorotate. The chain is Dihydroorotase from Coxiella burnetii (strain RSA 331 / Henzerling II).